Consider the following 137-residue polypeptide: ATP synthase epsilon chain (137 aa).

The protein belongs to the ATPase epsilon chain family. In terms of assembly, F-type ATPases have 2 components, CF(1) - the catalytic core - and CF(0) - the membrane proton channel. CF(1) has five subunits: alpha(3), beta(3), gamma(1), delta(1), epsilon(1). CF(0) has three main subunits: a, b and c.

The protein localises to the cellular thylakoid membrane. Its function is as follows. Produces ATP from ADP in the presence of a proton gradient across the membrane. In Trichormus variabilis (strain ATCC 29413 / PCC 7937) (Anabaena variabilis), this protein is ATP synthase epsilon chain.